The chain runs to 663 residues: Rho GTPase-activating protein 18 (663 aa).

Residues 15–37 (YHPSGKDQTVGNSHAKAGEEATS) form a disordered region. Phosphoserine is present on residues serine 66 and serine 69. Residue threonine 158 is modified to Phosphothreonine. 2 disordered regions span residues 179–227 (RESK…PAPE) and 243–277 (QKES…TRIG). 2 stretches are compositionally biased toward basic and acidic residues: residues 197 to 219 (NENK…KLIP) and 245 to 258 (ESSK…KGDD). Serine 263 is modified (phosphoserine). A Rho-GAP domain is found at 324–523 (VPLTALLEQD…LLIKYQKLLW (200 aa)). Serine 610 is subject to Phosphoserine.

As to quaternary structure, interacts with MPHOSPH6.

The protein resides in the cytoplasm. Functionally, rho GTPase activating protein that suppresses F-actin polymerization by inhibiting Rho. Rho GTPase activating proteins act by converting Rho-type GTPases to an inactive GDP-bound state. Plays a key role in tissue tension and 3D tissue shape by regulating cortical actomyosin network formation. Acts downstream of YAP1 and inhibits actin polymerization, which in turn reduces nuclear localization of YAP1. Regulates cell shape, spreading, and migration. This chain is Rho GTPase-activating protein 18, found in Homo sapiens (Human).